The sequence spans 354 residues: S-adenosylmethionine:tRNA ribosyltransferase-isomerase (354 aa).

The protein belongs to the QueA family. In terms of assembly, monomer.

It is found in the cytoplasm. It carries out the reaction 7-aminomethyl-7-carbaguanosine(34) in tRNA + S-adenosyl-L-methionine = epoxyqueuosine(34) in tRNA + adenine + L-methionine + 2 H(+). The protein operates within tRNA modification; tRNA-queuosine biosynthesis. Functionally, transfers and isomerizes the ribose moiety from AdoMet to the 7-aminomethyl group of 7-deazaguanine (preQ1-tRNA) to give epoxyqueuosine (oQ-tRNA). In Salmonella newport (strain SL254), this protein is S-adenosylmethionine:tRNA ribosyltransferase-isomerase.